A 337-amino-acid polypeptide reads, in one-letter code: MQIVEQMKDKALAELNLVKDKKTLDDIRVKYLGKKGELTEMMKLIATLPNDEKPKLGQAVNIAKQALQEAINLKLANFEEQELNEKLAQEKIDITLSGVGQNQGSLHPVTKTLNRIEAFFKQNGFAIEFGPEIESDYYNFETLNIPSHHPARAMHDTFYIDETHVLRTHTSGVQIRTMEKQQPPIRIIAPGRVYRCDSDITHTPMFHQVEGLLVDKDVSFADLKGLLHAFLNSFFEKDLKVRFRPSYFPFTEPSAEADIECVMCDGKGCRVCKHTGWLEVLGCGMVHPKVLKAGNIDSEKYQGFAFGMGVERLSMLRYGIDDLRMFFENDLRFLKQF.

Residue E252 coordinates Mg(2+).

It belongs to the class-II aminoacyl-tRNA synthetase family. Phe-tRNA synthetase alpha subunit type 1 subfamily. Tetramer of two alpha and two beta subunits. It depends on Mg(2+) as a cofactor.

The protein resides in the cytoplasm. The enzyme catalyses tRNA(Phe) + L-phenylalanine + ATP = L-phenylalanyl-tRNA(Phe) + AMP + diphosphate + H(+). This Francisella tularensis subsp. tularensis (strain SCHU S4 / Schu 4) protein is Phenylalanine--tRNA ligase alpha subunit.